Here is a 326-residue protein sequence, read N- to C-terminus: Glycolipid sulfotransferase MRA_1383 (326 aa).

Residue 40–45 (KSGLTW) coordinates 3'-phosphoadenylyl sulfate. Residue histidine 97 is the Proton acceptor of the active site. Position 116 to 124 (116 to 124 (RDPRDAAVS)) interacts with 3'-phosphoadenylyl sulfate.

The protein belongs to the sulfotransferase 1 family.

Functionally, involved in the synthesis of cell wall sulfolipids. The polypeptide is Glycolipid sulfotransferase MRA_1383 (Mycobacterium tuberculosis (strain ATCC 25177 / H37Ra)).